A 499-amino-acid polypeptide reads, in one-letter code: Zinc finger protein PLAG1 (499 aa).

Residues 1 to 33 (MATVIPGDLSEVRDTQKAPSGKRKRGESKPRKN) form a disordered region. Positions 2 to 84 (ATVIPGDLSE…SKYKLQRHMA (83 aa)) are interaction with KPNA2. Positions 22–25 (KRKR) match the Nuclear localization signal motif. 7 consecutive C2H2-type zinc fingers follow at residues 34–56 (FPCQ…SFSH), 62–86 (YKCT…MATH), 92–114 (HKCN…LHTH), 121–143 (FKCE…LALH), 150–172 (LTCK…LKSH), 185–207 (HQCE…MVVH), and 213–236 (FLCQ…KKSH). The decreased nuclear import with localization in the nucleus but also in the cytoplasm stretch occupies residues 41–242 (KAFNSVEKLK…KKSHNQELLK (202 aa)). The interval 243-383 (VKTEPVDFLD…SQASSSKLGL (141 aa)) is repression domain; contains 3 sumoylation motifs and massively decrease transcription activity. An activates transcription; Inhibition of nuclear import due to lack of NLS and KPNA2 interaction region spans residues 243–499 (VKTEPVDFLD…TLPRFHQAFQ (257 aa)). Residues K244 and K263 each participate in a glycyl lysine isopeptide (Lys-Gly) (interchain with G-Cter in SUMO) cross-link. A disordered region spans residues 364-400 (QGGAPSSSQDSQASSSKLGLEPQSGSPDDGAGDLSLS). Residues 369–379 (SSSQDSQASSS) are compositionally biased toward low complexity. A massively activates transcription region spans residues 384-499 (EPQSGSPDDG…TLPRFHQAFQ (116 aa)).

Belongs to the krueppel C2H2-type zinc-finger protein family. As to quaternary structure, interacts with KPNA2, which escorts protein to the nucleus via interaction with nuclear localization signal. Interacts with E3 SUMO-protein ligase PIAS1, PIAS2 and PIAS4. Post-translationally, sumoylated with SUMO1; which inhibits transcriptional activity, but does not affect nuclear localization. Blockers of sumoylation pathway such as SENP3 and inactive UBE2I increases transcriptional capacity. Sumoylation is increased in the presence of PIAS1. In terms of processing, acetylated by lysine acetyltransferase EP300; which activates transcriptional capacity. Lysine residues that are sumoylated also seem to be target for acetylation. Expressed in heart, spleen, lung, kidney, brain, testis and epididymis but not in salivary glands.

It is found in the nucleus. In terms of biological role, transcription factor whose activation results in up-regulation of target genes, such as IGFII, leading to uncontrolled cell proliferation: when overexpressed in cultured cells, higher proliferation rate and transformation are observed. Other target genes such as CRLF1, CRABP2, CRIP2, PIGF are strongly induced in cells with PLAG1 induction. Proto-oncogene whose ectopic expression can trigger the development of pleomorphic adenomas of the salivary gland and lipoblastomas. Cooperates with CBFB-MYH11. In Rattus norvegicus (Rat), this protein is Zinc finger protein PLAG1 (Plag1).